A 361-amino-acid polypeptide reads, in one-letter code: Probable dual-specificity RNA methyltransferase RlmN (361 aa).

Glu-102 functions as the Proton acceptor in the catalytic mechanism. The Radical SAM core domain occupies 108–344 (SGDRLTVCVS…VRWSKGLGAD (237 aa)). A disulfide bond links Cys-115 and Cys-347. Positions 122, 126, and 129 each coordinate [4Fe-4S] cluster. S-adenosyl-L-methionine contacts are provided by residues 169–170 (GE), Ser-199, 228–230 (SLH), and Asn-304. Residue Cys-347 is the S-methylcysteine intermediate of the active site.

This sequence belongs to the radical SAM superfamily. RlmN family. [4Fe-4S] cluster is required as a cofactor.

It localises to the cytoplasm. It carries out the reaction adenosine(2503) in 23S rRNA + 2 reduced [2Fe-2S]-[ferredoxin] + 2 S-adenosyl-L-methionine = 2-methyladenosine(2503) in 23S rRNA + 5'-deoxyadenosine + L-methionine + 2 oxidized [2Fe-2S]-[ferredoxin] + S-adenosyl-L-homocysteine. It catalyses the reaction adenosine(37) in tRNA + 2 reduced [2Fe-2S]-[ferredoxin] + 2 S-adenosyl-L-methionine = 2-methyladenosine(37) in tRNA + 5'-deoxyadenosine + L-methionine + 2 oxidized [2Fe-2S]-[ferredoxin] + S-adenosyl-L-homocysteine. In terms of biological role, specifically methylates position 2 of adenine 2503 in 23S rRNA and position 2 of adenine 37 in tRNAs. The protein is Probable dual-specificity RNA methyltransferase RlmN of Synechococcus elongatus (strain ATCC 33912 / PCC 7942 / FACHB-805) (Anacystis nidulans R2).